The primary structure comprises 119 residues: MSQRQQRVADLIHQQLAELLKKEVRDSRLSKISLTAVSISPDLKQAKVFYSLLENQNEKEVQKALNKATGYLRHLLAQATVLRYVPKLEFVYDESIERAHRISLLIERALKKDDSDESS.

The protein belongs to the RbfA family. As to quaternary structure, monomer. Binds 30S ribosomal subunits, but not 50S ribosomal subunits or 70S ribosomes.

The protein resides in the cytoplasm. In terms of biological role, one of several proteins that assist in the late maturation steps of the functional core of the 30S ribosomal subunit. Associates with free 30S ribosomal subunits (but not with 30S subunits that are part of 70S ribosomes or polysomes). Required for efficient processing of 16S rRNA. May interact with the 5'-terminal helix region of 16S rRNA. The polypeptide is Ribosome-binding factor A (Coxiella burnetii (strain CbuK_Q154) (Coxiella burnetii (strain Q154))).